A 455-amino-acid polypeptide reads, in one-letter code: Rho GTPase-activating protein 3 (455 aa).

Residues 1-12 (MTNFSRSKSTGT) show a composition bias toward polar residues. The interval 1-68 (MTNFSRSKST…HASRSGNGSG (68 aa)) is disordered. A compositionally biased stretch (basic and acidic residues) spans 24–33 (GPDKYENIHN). Over residues 43–54 (STTSTDYYDAST) the composition is skewed to low complexity. Positions 55–64 (PLSSHASRSG) are enriched in polar residues. A CRIB domain is found at 105–118 (IGWPTEVKHVSHVT). Positions 153 to 331 (KSMQCSYDDR…LILMNLKERE (179 aa)) constitute a Rho-GAP domain. Disordered stretches follow at residues 342–366 (KQTS…KPNN) and 432–455 (FVSN…SLPW). Basic and acidic residues predominate over residues 435 to 446 (NRDEGRKGREAW).

As to expression, expressed in differentiating xylem cells.

It localises to the cell membrane. Acts as a GTPase activator for the Rac-type GTPase by converting it to an inactive GDP-bound state. Involved in secondary wall pattern formation. In association with ROPGEF4, mediates local activation of ARAC10/ROP11 to initiate the distinct pattern of secondary cell walls in xylem cells. This Arabidopsis thaliana (Mouse-ear cress) protein is Rho GTPase-activating protein 3 (ROPGAP3).